Consider the following 592-residue polypeptide: LIM domain-binding protein 1 (592 aa).

Disordered regions lie at residues G14–N41 and P305–T368. The span at E23–N41 shows a compositional bias: polar residues. The segment covering P322 to T344 has biased composition (low complexity). Residues P352–T368 are compositionally biased toward polar residues. The LIM interaction domain (LID) domain maps to D378–S417. Disordered regions lie at residues H437–Q458 and G559–G592. Residues G577–N586 are compositionally biased toward pro residues.

The protein belongs to the LDB family. In terms of assembly, interacts with blmp-1. In terms of tissue distribution, expressed in all neurons and some other tissues of the adult, including vulval muscle, and, in males, all the neurons of the tail region. Expressed in vulval cells.

Binds to the LIM domain of LIM domain-containing transcription factors. Required for the blmp-1-mediated transcriptional activation or repression of several hypodermal genes, such as bed-3. Regulates sam-10 nuclear localization in PLM neurons. Has a role in synaptic differentiation of PLM mechanosensory neurons. Involved in gonadogenesis. The chain is LIM domain-binding protein 1 from Caenorhabditis elegans.